Consider the following 279-residue polypeptide: Tryptophan synthase alpha chain (279 aa).

Catalysis depends on proton acceptor residues Glu-50 and Asp-61.

This sequence belongs to the TrpA family. Tetramer of two alpha and two beta chains.

It catalyses the reaction (1S,2R)-1-C-(indol-3-yl)glycerol 3-phosphate + L-serine = D-glyceraldehyde 3-phosphate + L-tryptophan + H2O. It participates in amino-acid biosynthesis; L-tryptophan biosynthesis; L-tryptophan from chorismate: step 5/5. Its function is as follows. The alpha subunit is responsible for the aldol cleavage of indoleglycerol phosphate to indole and glyceraldehyde 3-phosphate. The protein is Tryptophan synthase alpha chain of Brucella anthropi (strain ATCC 49188 / DSM 6882 / CCUG 24695 / JCM 21032 / LMG 3331 / NBRC 15819 / NCTC 12168 / Alc 37) (Ochrobactrum anthropi).